The primary structure comprises 160 residues: Cytochrome b6-f complex subunit 4 (160 aa).

3 helical membrane passes run 36 to 56 (LLYI…GLSV), 95 to 115 (LLGV…PFIE), and 131 to 151 (TVFL…TFPI).

Belongs to the cytochrome b family. PetD subfamily. In terms of assembly, the 4 large subunits of the cytochrome b6-f complex are cytochrome b6, subunit IV (17 kDa polypeptide, petD), cytochrome f and the Rieske protein, while the 4 small subunits are petG, petL, petM and petN. The complex functions as a dimer.

It localises to the plastid. It is found in the chloroplast thylakoid membrane. Component of the cytochrome b6-f complex, which mediates electron transfer between photosystem II (PSII) and photosystem I (PSI), cyclic electron flow around PSI, and state transitions. In Stigeoclonium helveticum (Green alga), this protein is Cytochrome b6-f complex subunit 4.